A 223-amino-acid chain; its full sequence is Ribonuclease 3 (223 aa).

Residues 4–127 (LNRLEEHLGY…LMGAIYLESG (124 aa)) enclose the RNase III domain. Position 40 (Glu-40) interacts with Mg(2+). Residue Asp-44 is part of the active site. Mg(2+) contacts are provided by Asp-113 and Glu-116. Glu-116 is a catalytic residue. In terms of domain architecture, DRBM spans 154-223 (DYKTTLQEIT…AWKVLQGMNI (70 aa)).

Belongs to the ribonuclease III family. Homodimer. The cofactor is Mg(2+).

The protein localises to the cytoplasm. It catalyses the reaction Endonucleolytic cleavage to 5'-phosphomonoester.. Functionally, digests double-stranded RNA. Involved in the processing of primary rRNA transcript to yield the immediate precursors to the large and small rRNAs (23S and 16S). Processes some mRNAs, and tRNAs when they are encoded in the rRNA operon. Processes pre-crRNA and tracrRNA of type II CRISPR loci if present in the organism. This chain is Ribonuclease 3, found in Campylobacter fetus subsp. fetus (strain 82-40).